The chain runs to 471 residues: UDP-N-acetylmuramate--L-alanine ligase (471 aa).

Gly114–Thr120 serves as a coordination point for ATP.

The protein belongs to the MurCDEF family.

The protein resides in the cytoplasm. The enzyme catalyses UDP-N-acetyl-alpha-D-muramate + L-alanine + ATP = UDP-N-acetyl-alpha-D-muramoyl-L-alanine + ADP + phosphate + H(+). It functions in the pathway cell wall biogenesis; peptidoglycan biosynthesis. Cell wall formation. The protein is UDP-N-acetylmuramate--L-alanine ligase of Brucella abortus (strain S19).